The chain runs to 279 residues: Ribonuclease Z (279 aa).

Positions 64, 66, 68, 69, 134, 191, and 245 each coordinate Zn(2+). The active-site Proton acceptor is Asp-68.

It belongs to the RNase Z family. Homodimer. It depends on Zn(2+) as a cofactor.

It catalyses the reaction Endonucleolytic cleavage of RNA, removing extra 3' nucleotides from tRNA precursor, generating 3' termini of tRNAs. A 3'-hydroxy group is left at the tRNA terminus and a 5'-phosphoryl group is left at the trailer molecule.. Functionally, zinc phosphodiesterase, which displays some tRNA 3'-processing endonuclease activity. Probably involved in tRNA maturation, by removing a 3'-trailer from precursor tRNA. In Methanopyrus kandleri (strain AV19 / DSM 6324 / JCM 9639 / NBRC 100938), this protein is Ribonuclease Z.